A 163-amino-acid polypeptide reads, in one-letter code: Inorganic pyrophosphatase (163 aa).

Residue Glu-8 coordinates Mg(2+). The substrate site is built by Lys-16, Arg-30, and Tyr-42. Asp-52, Asp-57, Asp-84, and Asp-89 together coordinate Mg(2+). Catalysis depends on Asp-89, which acts as the Proton acceptor. Residue Tyr-126 participates in substrate binding.

Belongs to the PPase family. Homohexamer. Mg(2+) serves as cofactor.

Its subcellular location is the cytoplasm. It carries out the reaction diphosphate + H2O = 2 phosphate + H(+). Catalyzes the hydrolysis of inorganic pyrophosphate (PPi) forming two phosphate ions. The chain is Inorganic pyrophosphatase from Streptomyces coelicolor (strain ATCC BAA-471 / A3(2) / M145).